The chain runs to 75 residues: Putative defensin-like protein 271 (75 aa).

The N-terminal stretch at 1–23 (MTSMKLHIVALCIIVSFLVNVQS) is a signal peptide. Intrachain disulfides connect cysteine 33/cysteine 72, cysteine 39/cysteine 61, cysteine 45/cysteine 70, and cysteine 49/cysteine 71.

This sequence belongs to the DEFL family.

It localises to the secreted. In Arabidopsis thaliana (Mouse-ear cress), this protein is Putative defensin-like protein 271.